A 160-amino-acid polypeptide reads, in one-letter code: 2-C-methyl-D-erythritol 2,4-cyclodiphosphate synthase (160 aa).

Residues D10 and H12 each contribute to the a divalent metal cation site. Residues 10-12 and 36-37 contribute to the 4-CDP-2-C-methyl-D-erythritol 2-phosphate site; these read DVH and HS. Residue H44 participates in a divalent metal cation binding. 4-CDP-2-C-methyl-D-erythritol 2-phosphate is bound by residues 58–60, 63–67, and R144; these read DIG and FPDTD.

Belongs to the IspF family. In terms of assembly, homotrimer. A divalent metal cation is required as a cofactor.

The enzyme catalyses 4-CDP-2-C-methyl-D-erythritol 2-phosphate = 2-C-methyl-D-erythritol 2,4-cyclic diphosphate + CMP. The protein operates within isoprenoid biosynthesis; isopentenyl diphosphate biosynthesis via DXP pathway; isopentenyl diphosphate from 1-deoxy-D-xylulose 5-phosphate: step 4/6. Its function is as follows. Involved in the biosynthesis of isopentenyl diphosphate (IPP) and dimethylallyl diphosphate (DMAPP), two major building blocks of isoprenoid compounds. Catalyzes the conversion of 4-diphosphocytidyl-2-C-methyl-D-erythritol 2-phosphate (CDP-ME2P) to 2-C-methyl-D-erythritol 2,4-cyclodiphosphate (ME-CPP) with a corresponding release of cytidine 5-monophosphate (CMP). The chain is 2-C-methyl-D-erythritol 2,4-cyclodiphosphate synthase from Dechloromonas aromatica (strain RCB).